A 418-amino-acid polypeptide reads, in one-letter code: Tyrosine--tRNA ligase (418 aa).

A 'HIGH' region motif is present at residues 42–51 (PTAPDLHLGH). Residues 226–230 (KMSKS) carry the 'KMSKS' region motif. Lys229 provides a ligand contact to ATP. The S4 RNA-binding domain maps to 339-400 (VRLVALLTKS…GKRNFAKVRL (62 aa)).

Belongs to the class-I aminoacyl-tRNA synthetase family. TyrS type 2 subfamily. In terms of assembly, homodimer.

The protein localises to the cytoplasm. The catalysed reaction is tRNA(Tyr) + L-tyrosine + ATP = L-tyrosyl-tRNA(Tyr) + AMP + diphosphate + H(+). Its function is as follows. Catalyzes the attachment of tyrosine to tRNA(Tyr) in a two-step reaction: tyrosine is first activated by ATP to form Tyr-AMP and then transferred to the acceptor end of tRNA(Tyr). In Xylella fastidiosa (strain 9a5c), this protein is Tyrosine--tRNA ligase.